The sequence spans 492 residues: Putative heme-binding protein VNG_2021C (492 aa).

Residue His-177 coordinates heme. Positions 253–301 (AGERVPAPEGGADAHGEGERTHHHGDSDHHDGDDGEQHHHSTGDEADDG) are disordered. Residues 264 to 301 (ADAHGEGERTHHHGDSDHHDGDDGEQHHHSTGDEADDG) show a composition bias toward basic and acidic residues. Residues 402 to 490 (GTMGMFYETK…VLADRPRHVF (89 aa)) form the ABM domain.

The protein in the N-terminal section; belongs to the ChdC family.

This is Putative heme-binding protein VNG_2021C from Halobacterium salinarum (strain ATCC 700922 / JCM 11081 / NRC-1) (Halobacterium halobium).